Here is a 427-residue protein sequence, read N- to C-terminus: Tol-Pal system protein TolB (427 aa).

Residues 1–27 (MPVSLLRALLVFSLLCLGLSATRAAHA) form the signal peptide.

Belongs to the TolB family. In terms of assembly, the Tol-Pal system is composed of five core proteins: the inner membrane proteins TolA, TolQ and TolR, the periplasmic protein TolB and the outer membrane protein Pal. They form a network linking the inner and outer membranes and the peptidoglycan layer.

It is found in the periplasm. In terms of biological role, part of the Tol-Pal system, which plays a role in outer membrane invagination during cell division and is important for maintaining outer membrane integrity. The protein is Tol-Pal system protein TolB of Thiobacillus denitrificans (strain ATCC 25259 / T1).